We begin with the raw amino-acid sequence, 180 residues long: MSSTIASRRYAKALLDVAEEGGYVDQMVNDLDAVREVVAESRDLLTMLRSPVVNGDLKARILKEVFNGAVSGKTMLFFELLCRKKRAGLLADVIEEFSALRDERGGVVNVDVTSAVKLNDEQSRKLINGLSVYTGKKVRARLSLDEHLIGGVKVQIGDTILDNTVVHQLERLKHALGEEA.

This sequence belongs to the ATPase delta chain family. In terms of assembly, F-type ATPases have 2 components, F(1) - the catalytic core - and F(0) - the membrane proton channel. F(1) has five subunits: alpha(3), beta(3), gamma(1), delta(1), epsilon(1). F(0) has three main subunits: a(1), b(2) and c(10-14). The alpha and beta chains form an alternating ring which encloses part of the gamma chain. F(1) is attached to F(0) by a central stalk formed by the gamma and epsilon chains, while a peripheral stalk is formed by the delta and b chains.

The protein resides in the cell inner membrane. Its function is as follows. F(1)F(0) ATP synthase produces ATP from ADP in the presence of a proton or sodium gradient. F-type ATPases consist of two structural domains, F(1) containing the extramembraneous catalytic core and F(0) containing the membrane proton channel, linked together by a central stalk and a peripheral stalk. During catalysis, ATP synthesis in the catalytic domain of F(1) is coupled via a rotary mechanism of the central stalk subunits to proton translocation. In terms of biological role, this protein is part of the stalk that links CF(0) to CF(1). It either transmits conformational changes from CF(0) to CF(1) or is implicated in proton conduction. The sequence is that of ATP synthase subunit delta from Chlorobium phaeobacteroides (strain BS1).